The primary structure comprises 141 residues: Hemoglobin subunit alpha (141 aa).

Residues 1-141 enclose the Globin domain; it reads VLSPADKTNV…VSTVLTSKYR (141 aa). Position 3 is a phosphoserine (Ser-3). Lys-7 is subject to N6-succinyllysine. Residue Thr-8 is modified to Phosphothreonine. An N6-succinyllysine modification is found at Lys-11. Ser-35 carries the phosphoserine modification. The residue at position 40 (Lys-40) is an N6-succinyllysine. Ser-49 is subject to Phosphoserine. His-58 provides a ligand contact to O2. Residue His-87 participates in heme b binding. Phosphoserine is present on Ser-102. Residue Thr-108 is modified to Phosphothreonine. A Phosphoserine modification is found at Ser-124. 2 positions are modified to phosphothreonine: Thr-134 and Thr-137. Ser-138 is subject to Phosphoserine.

The protein belongs to the globin family. Heterotetramer of two alpha chains and two beta chains. As to expression, red blood cells.

Functionally, involved in oxygen transport from the lung to the various peripheral tissues. Hemopressin acts as an antagonist peptide of the cannabinoid receptor CNR1. Hemopressin-binding efficiently blocks cannabinoid receptor CNR1 and subsequent signaling. The chain is Hemoglobin subunit alpha (HBA) from Eulemur fulvus fulvus (Brown lemur).